The sequence spans 467 residues: Dimethylamine methyltransferase MtbB2 (467 aa).

Position 356 (pyrrolysine 356) is a non-standard amino acid, pyrrolysine.

Belongs to the dimethylamine methyltransferase family.

The catalysed reaction is Co(I)-[dimethylamine-specific corrinoid protein] + dimethylamine + H(+) = methyl-Co(III)-[dimethylamine-specific corrinoid protein] + methylamine. It participates in one-carbon metabolism; methanogenesis from dimethylamine. Catalyzes the transfer of a methyl group from dimethylamine to the corrinoid cofactor of MtbC. This Methanosarcina barkeri (strain Fusaro / DSM 804) protein is Dimethylamine methyltransferase MtbB2 (mtbB2).